Reading from the N-terminus, the 693-residue chain is MTEITAEGNASTTTTVIDNKNGCIPKSPGKVLKRSVTEDIVTTFSSPAAWLLVIALIITWSAVAIVMFDLVDYKNFSASSIAKIGSDPLKLVNDAVEETTDWIYGFFSLLSDIISSEGDEDDEDADEDIDKGEIEEPPLKRKEIHQEKAEKEEKPEKKIQTKASHREREKGKEKLKGEKPEKTATHKEKLEKKERPETKMMAKEDKKIKTKEKTEEKAKKEMKVGKQEKVKPTAAKAKETPKTPPKARKKDDKEMPAVHEQKDQYAFCRYMIDMFVHGDLKPGQSPVMPPPSLTPSKPALSTTALEEKEKEEKKKMEKKDTSDTKKKEKEVKKKSEETTIDGKGKEPGKPPETKQMTAKLTTQAAARKDEKKEESKKMRKPTEEQPKGKKQEKKEKHIEPAKTPKKEHPGPSEKLKKAKAEQAKEEIAAASTKKALHGKKEEKAKTVEQEVKKEKSGKSSSDLKDKEVKKEKSGKSSSDLKDKEPQLKNEEKSKPQVKKEAKLASSDKGQTRKQNITRPEQVIPHVKPEKAEHQEKGHPSIKKDKPKPSSKGAPEVPDSGKKKIEKSEKESKVPTREENLQVYNVTKAEKPGKIPKDSKEAPASKKDKEDSKEAPTSKKDKEDSKDVPHSKKDKEVTDDVSSPKKQTRPISFFQCVYLNGYNGYGFQFPVTPVQQPGENPGKTNSPGQKQQEQ.

Residues 1 to 47 (MTEITAEGNASTTTTVIDNKNGCIPKSPGKVLKRSVTEDIVTTFSSP) lie on the Cytoplasmic side of the membrane. Residues 48-68 (AAWLLVIALIITWSAVAIVMF) traverse the membrane as a helical segment. Over 69 to 693 (DLVDYKNFSA…NSPGQKQQEQ (625 aa)) the chain is Lumenal. Residues 117–130 (EGDEDDEDADEDID) show a composition bias toward acidic residues. 3 disordered regions span residues 117-260 (EGDE…AVHE), 278-649 (GDLK…QTRP), and 666-693 (FQFP…QQEQ). Composition is skewed to basic and acidic residues over residues 131–241 (KGEI…KETP) and 249–260 (KKDDKEMPAVHE). Ser-301 is subject to Phosphoserine. Over residues 305-352 (LEEKEKEEKKKMEKKDTSDTKKKEKEVKKKSEETTIDGKGKEPGKPPE) the composition is skewed to basic and acidic residues. Positions 354–364 (KQMTAKLTTQA) are enriched in polar residues. 2 stretches are compositionally biased toward basic and acidic residues: residues 366-427 (ARKD…KEEI) and 438-502 (GKKE…KEAK). Residue Asn-515 is glycosylated (N-linked (GlcNAc...) asparagine). 2 stretches are compositionally biased toward basic and acidic residues: residues 526–547 (VKPE…DKPK) and 558–579 (DSGK…REEN). A glycan (N-linked (GlcNAc...) asparagine) is linked at Asn-584. Basic and acidic residues predominate over residues 587 to 637 (KAEKPGKIPKDSKEAPASKKDKEDSKEAPTSKKDKEDSKDVPHSKKDKEVT). A compositionally biased stretch (polar residues) spans 672–693 (PVQQPGENPGKTNSPGQKQQEQ).

Homooligomer of variable subunit number; disulfide-linked. Interacts with CASQ1 and RYR1 in skeletal muscle. Interacts with CASQ2. Phosphorylated by CaMK2. Post-translationally, N-glycosylated. As to expression, detected in heart (at protein level). Detected in heart.

The protein localises to the sarcoplasmic reticulum membrane. Its function is as follows. Contributes to the regulation of lumenal Ca2+ release via the sarcoplasmic reticulum calcium release channels RYR1 and RYR2, a key step in triggering skeletal and heart muscle contraction. Required for normal organization of the triad junction, where T-tubules and the sarcoplasmic reticulum terminal cisternae are in close contact. Required for normal skeletal muscle strength. Plays a role in excitation-contraction coupling in the heart and in regulating the rate of heart beats. The sequence is that of Triadin from Mus musculus (Mouse).